The sequence spans 532 residues: GH3 domain-containing protein (532 aa).

The first 18 residues, 1 to 18, serve as a signal peptide directing secretion; it reads MLLLWLLLLLLLLVPLLA. Positions 100 to 123 are disordered; sequence LTQTSHTQEQESEETLPSPASPQY. Asn356 and Asn451 each carry an N-linked (GlcNAc...) asparagine glycan.

The protein belongs to the GH3 family. In terms of tissue distribution, highly expressed in mammary tissues from mature virgins and at day 13 of pregnancy, and at lower level during lactation. Expressed at intermediate level in liver. Expressed at lower level in kidney, heart and brain.

The protein resides in the endoplasmic reticulum. The protein localises to the nucleus envelope. The protein is GH3 domain-containing protein (Ghdc) of Mus musculus (Mouse).